The sequence spans 279 residues: Large ribosomal subunit protein uL2 (279 aa).

Residues 202–279 form a disordered region; it reads NASIGKAGRS…TSRHKSKKKG (78 aa). A compositionally biased stretch (basic residues) spans 209 to 220; sequence GRSRWLGRRPHN.

This sequence belongs to the universal ribosomal protein uL2 family. As to quaternary structure, part of the 50S ribosomal subunit. Forms a bridge to the 30S subunit in the 70S ribosome.

Its function is as follows. One of the primary rRNA binding proteins. Required for association of the 30S and 50S subunits to form the 70S ribosome, for tRNA binding and peptide bond formation. It has been suggested to have peptidyltransferase activity; this is somewhat controversial. Makes several contacts with the 16S rRNA in the 70S ribosome. This chain is Large ribosomal subunit protein uL2, found in Methylocella silvestris (strain DSM 15510 / CIP 108128 / LMG 27833 / NCIMB 13906 / BL2).